Reading from the N-terminus, the 337-residue chain is tRNA N6-adenosine threonylcarbamoyltransferase (337 aa).

Fe cation contacts are provided by His111 and His115. Residues 134-138 (LVSGG), Asp167, Gly180, and Asn272 contribute to the substrate site. Asp300 contributes to the Fe cation binding site.

It belongs to the KAE1 / TsaD family. Requires Fe(2+) as cofactor.

It is found in the cytoplasm. It carries out the reaction L-threonylcarbamoyladenylate + adenosine(37) in tRNA = N(6)-L-threonylcarbamoyladenosine(37) in tRNA + AMP + H(+). In terms of biological role, required for the formation of a threonylcarbamoyl group on adenosine at position 37 (t(6)A37) in tRNAs that read codons beginning with adenine. Is involved in the transfer of the threonylcarbamoyl moiety of threonylcarbamoyl-AMP (TC-AMP) to the N6 group of A37, together with TsaE and TsaB. TsaD likely plays a direct catalytic role in this reaction. In Yersinia enterocolitica serotype O:8 / biotype 1B (strain NCTC 13174 / 8081), this protein is tRNA N6-adenosine threonylcarbamoyltransferase.